Consider the following 26-residue polypeptide: Fumarylacetoacetate hydrolase domain-containing protein 2A (26 aa).

The protein belongs to the FAH family. Ca(2+) serves as cofactor. Requires Mg(2+) as cofactor.

Its function is as follows. May have hydrolase activity. This is Fumarylacetoacetate hydrolase domain-containing protein 2A from Mesocricetus auratus (Golden hamster).